A 317-amino-acid polypeptide reads, in one-letter code: Succinate receptor 1 (317 aa).

The Extracellular segment spans residues 1–27; it reads MAQNLSCENWLALENILKKYYLSAFYG. An N-linked (GlcNAc...) asparagine glycan is attached at Asn-4. Residues 28–48 form a helical membrane-spanning segment; sequence IEFIVGMLGNFTVVFGYLFCM. The Cytoplasmic portion of the chain corresponds to 49 to 55; that stretch reads KNWNSSN. Residues 56–76 form a helical membrane-spanning segment; that stretch reads VYLFNLSISDLAFLCTLPMLI. At 77–99 the chain is on the extracellular side; the sequence is RSYATGNWTYGDVLCISNRYVLH. The cysteines at positions 91 and 168 are disulfide-linked. The chain crosses the membrane as a helical span at residues 100-120; it reads ANLYTSILFLTFISIDRYLLM. Residues 121 to 133 lie on the Cytoplasmic side of the membrane; the sequence is KFPFREHILQKKE. The helical transmembrane segment at 134–154 threads the bilayer; that stretch reads FAILISLAVWVLVTLEVLPML. The Extracellular segment spans residues 155-181; sequence TFITSTPIEKGDSCVDYASSGNPKYSL. The chain crosses the membrane as a helical span at residues 182–202; that stretch reads IYSLCLTLLGFLIPLSVMCFF. The Cytoplasmic portion of the chain corresponds to 203–226; sequence YYKMVVFLKKRSQQQATVLSLNKP. A helical membrane pass occupies residues 227-247; that stretch reads LRLVVLAVVIFSVLFTPYHIM. Over 248–276 the chain is Extracellular; sequence RNVRIASRLDSWPQGCSQKAIKCLYILTR. Residues 277 to 297 traverse the membrane as a helical segment; sequence PLAFLNSAVNPIFYFLVGDHF. The Cytoplasmic segment spans residues 298–317; that stretch reads RDMLFSKLRQYFKSLTSFRL.

It belongs to the G-protein coupled receptor 1 family. In terms of tissue distribution, expressed in retina.

Its subcellular location is the cell membrane. Its function is as follows. G protein-coupled receptor for succinate able to mediate signaling through Gq/GNAQ or Gi/GNAI second messengers depending on the cell type and the processes regulated. Succinate-SUCNR1 signaling serves as a link between metabolic stress, inflammation and energy homeostasisn. In macrophages, plays a range of immune-regulatory roles. During inflammation, succinate-SUCNR1 signaling may act as an anti-inflammatory mediator or boost inflammation depending on the inflammatory status of cells. Hyperpolarizes M2 macrophages versus M1 phenotype through Gq signaling by regulating the transcription of genes involved in immune function. In activated M1 macrophages, plays a pro-inflammatory role in response to LPS. Expressed in dendritic cells, where it is involved in the sensing of immunological danger and enhances immunity. Mediates succinate triggered intracelleular calcium mobilization, induces migratory responses and acts in synergy with Toll-like receptor ligands for the production of proinflammatory cytokines as well as an enhancement of antigen-specific activation of helper T cells. In the small intestine, mediates the activation of tuft cells by dietary succinate and triggers type 2 immunity. In adipocytes, plays an important role in the control of energy metabolism. In response to succinate, controls leptin expression in an AMPK-JNK-CEBPA-dependent as well as circadian clock-regulated manner. In muscle tissue, is expressed in non-muscle cells and coordinates muscle remodeling in response to the succinate produced during exercise training in a paracrine manner. In retina, acts as a mediator of vessel growth during retinal development. In response to succinate, regulates the production of angiogenic factors, including VEGF, by retinal ganglion neurons. The protein is Succinate receptor 1 (Sucnr1) of Rattus norvegicus (Rat).